The following is a 254-amino-acid chain: PF03932 family protein CutC (254 aa).

Belongs to the CutC family.

The protein resides in the cytoplasm. In Yersinia pseudotuberculosis serotype I (strain IP32953), this protein is PF03932 family protein CutC.